Here is a 356-residue protein sequence, read N- to C-terminus: Alanine racemase, catabolic (356 aa).

Lysine 35 (proton acceptor; specific for D-alanine) is an active-site residue. At lysine 35 the chain carries N6-(pyridoxal phosphate)lysine. Residue arginine 130 coordinates substrate. Catalysis depends on tyrosine 253, which acts as the Proton acceptor; specific for L-alanine. Methionine 301 lines the substrate pocket.

This sequence belongs to the alanine racemase family. The cofactor is pyridoxal 5'-phosphate.

It carries out the reaction L-alanine = D-alanine. Isomerizes L-alanine to D-alanine which is then oxidized to pyruvate by DadA. In Salmonella typhi, this protein is Alanine racemase, catabolic (dadX).